We begin with the raw amino-acid sequence, 442 residues long: GTPase HflX (442 aa).

The region spanning 186–362 (VLVALAGYTN…ALNRVVLKLP (177 aa)) is the Hflx-type G domain. Residues 192 to 199 (GYTNAGKS), 217 to 221 (FTTLD), 238 to 241 (DTVG), 306 to 309 (NKID), and 341 to 343 (SAR) each bind GTP. Residues serine 199 and threonine 219 each coordinate Mg(2+).

The protein belongs to the TRAFAC class OBG-HflX-like GTPase superfamily. HflX GTPase family. Monomer. Associates with the 50S ribosomal subunit. It depends on Mg(2+) as a cofactor.

It is found in the cytoplasm. In terms of biological role, GTPase that associates with the 50S ribosomal subunit and may have a role during protein synthesis or ribosome biogenesis. This is GTPase HflX from Thermococcus kodakarensis (strain ATCC BAA-918 / JCM 12380 / KOD1) (Pyrococcus kodakaraensis (strain KOD1)).